Here is a 326-residue protein sequence, read N- to C-terminus: HTH-type transcriptional regulator BlaA (326 aa).

Residues 1–59 (MDVVNACRAFVKVSERGSFTVGAAAAQMSQSVASRRVAALEKHFGERLFDRASRRPSLT) enclose the HTH lysR-type domain. The H-T-H motif DNA-binding region spans 19-38 (FTVGAAAAQMSQSVASRRVA). The tract at residues 289–326 (TADHGPDPATGAGPGADAGTEPGARAEPGAPEEGAQAC) is disordered. Over residues 295-326 (DPATGAGPGADAGTEPGARAEPGAPEEGAQAC) the composition is skewed to low complexity.

Belongs to the LysR transcriptional regulatory family.

In terms of biological role, positive regulator of the expression of the gene (blaB) for beta-lactamase. It binds to the blaL-blaA intercistronic region. The sequence is that of HTH-type transcriptional regulator BlaA (blaA) from Streptomyces cacaoi.